A 1342-amino-acid polypeptide reads, in one-letter code: DNA-directed RNA polymerase subunit beta (1342 aa).

N6-acetyllysine is present on residues Lys1022 and Lys1200.

The protein belongs to the RNA polymerase beta chain family. In terms of assembly, the RNAP catalytic core consists of 2 alpha, 1 beta, 1 beta' and 1 omega subunit. When a sigma factor is associated with the core the holoenzyme is formed, which can initiate transcription.

The enzyme catalyses RNA(n) + a ribonucleoside 5'-triphosphate = RNA(n+1) + diphosphate. DNA-dependent RNA polymerase catalyzes the transcription of DNA into RNA using the four ribonucleoside triphosphates as substrates. The chain is DNA-directed RNA polymerase subunit beta from Shigella dysenteriae serotype 1 (strain Sd197).